The following is a 311-amino-acid chain: Porphobilinogen deaminase (311 aa).

Cys243 bears the S-(dipyrrolylmethanemethyl)cysteine mark.

It belongs to the HMBS family. Monomer. Dipyrromethane serves as cofactor.

The catalysed reaction is 4 porphobilinogen + H2O = hydroxymethylbilane + 4 NH4(+). It functions in the pathway porphyrin-containing compound metabolism; protoporphyrin-IX biosynthesis; coproporphyrinogen-III from 5-aminolevulinate: step 2/4. Tetrapolymerization of the monopyrrole PBG into the hydroxymethylbilane pre-uroporphyrinogen in several discrete steps. The polypeptide is Porphobilinogen deaminase (Blochmanniella floridana).